Reading from the N-terminus, the 128-residue chain is Organic solute transporter subunit beta (128 aa).

Over 1–30 (MDHSAEKAAANAEVPQELLEEMLWYFRAED) the chain is Extracellular. A helical transmembrane segment spans residues 31 to 53 (AAPWNYSILVLAVLVVMTSMFLL). Topologically, residues 54 to 128 (RRSILANRNR…FLPDPQETES (75 aa)) are cytoplasmic. Disordered stretches follow at residues 61 to 80 (RNRK…HLDD) and 101 to 128 (PDLA…ETES). Composition is skewed to basic and acidic residues over residues 66 to 80 (QPQD…HLDD) and 101 to 115 (PDLA…EKDS). S116 carries the post-translational modification Phosphoserine.

This sequence belongs to the OST-beta family. As to quaternary structure, interacts with SLC51A. The Ost-alpha/Ost-beta complex is a heterodimer composed of alpha (SLC51A) and beta (SLC51B) subunit; induces the transport of SLC51A from the endoplasmic reticulum to the plasma membrane. In terms of tissue distribution, present at high level in ileum. In ileum, it is restricted to the apical domain on the mature villus enterocytes with little detectable expression in the goblet cells or crypt enterocytes (at protein level). Expressed in kidney but not in heart, brain, liver, spleen, embryo, lung, thymus, ovary nor testis.

It is found in the cell membrane. It catalyses the reaction taurocholate(out) = taurocholate(in). It carries out the reaction tauroursodeoxycholate(out) = tauroursodeoxycholate(in). The enzyme catalyses glycoursodeoxycholate(out) = glycoursodeoxycholate(in). The catalysed reaction is glycocholate(out) = glycocholate(in). It catalyses the reaction taurochenodeoxycholate(out) = taurochenodeoxycholate(in). It carries out the reaction glycochenodeoxycholate(out) = glycochenodeoxycholate(in). The enzyme catalyses taurodeoxycholate(out) = taurodeoxycholate(in). The catalysed reaction is glycodeoxycholate(out) = glycodeoxycholate(in). It catalyses the reaction prostaglandin E2(out) = prostaglandin E2(in). It carries out the reaction estrone 3-sulfate(out) = estrone 3-sulfate(in). The enzyme catalyses dehydroepiandrosterone 3-sulfate(out) = dehydroepiandrosterone 3-sulfate(in). Its function is as follows. Essential component of the Ost-alpha/Ost-beta complex, a heterodimer that acts as the intestinal basolateral transporter responsible for bile acid export from enterocytes into portal blood. The Ost-alpha/Ost-beta complex efficiently transports the major species of bile acids (taurocholate). Taurine conjugates are transported more efficiently across the basolateral membrane than glycine-conjugated bile acids. Can also transport steroids such as estrone 3-sulfate and dehydroepiandrosterone 3-sulfate, therefore playing a role in the enterohepatic circulation of sterols. Able to transport eicosanoids such as prostaglandin E2. Modulates SLC51A glycosylation, membrane trafficking and stability activities. The protein is Organic solute transporter subunit beta (Slc51b) of Mus musculus (Mouse).